The chain runs to 1060 residues: DNA-directed RNA polymerase subunit beta (1060 aa).

The protein belongs to the RNA polymerase beta chain family. As to quaternary structure, in plastids the minimal PEP RNA polymerase catalytic core is composed of four subunits: alpha, beta, beta', and beta''. When a (nuclear-encoded) sigma factor is associated with the core the holoenzyme is formed, which can initiate transcription.

Its subcellular location is the plastid. It is found in the chloroplast. The enzyme catalyses RNA(n) + a ribonucleoside 5'-triphosphate = RNA(n+1) + diphosphate. Functionally, DNA-dependent RNA polymerase catalyzes the transcription of DNA into RNA using the four ribonucleoside triphosphates as substrates. In Calycanthus floridus var. glaucus (Eastern sweetshrub), this protein is DNA-directed RNA polymerase subunit beta.